The sequence spans 202 residues: Probable chemoreceptor glutamine deamidase CheD (202 aa).

Belongs to the CheD family.

It carries out the reaction L-glutaminyl-[protein] + H2O = L-glutamyl-[protein] + NH4(+). Probably deamidates glutamine residues to glutamate on methyl-accepting chemotaxis receptors (MCPs), playing an important role in chemotaxis. The protein is Probable chemoreceptor glutamine deamidase CheD of Thiobacillus denitrificans (strain ATCC 25259 / T1).